The chain runs to 344 residues: Small ribosomal subunit biogenesis GTPase RsgA (344 aa).

One can recognise a CP-type G domain in the interval 100–268 (KNELSRPDYY…LIDSPGIREF (169 aa)). GTP-binding positions include 156–159 (NKID) and 210–218 (GQSGVGKSS). Zn(2+)-binding residues include cysteine 292, cysteine 297, histidine 299, and cysteine 305.

This sequence belongs to the TRAFAC class YlqF/YawG GTPase family. RsgA subfamily. In terms of assembly, monomer. Associates with 30S ribosomal subunit, binds 16S rRNA. Zn(2+) is required as a cofactor.

Its subcellular location is the cytoplasm. In terms of biological role, one of several proteins that assist in the late maturation steps of the functional core of the 30S ribosomal subunit. Helps release RbfA from mature subunits. May play a role in the assembly of ribosomal proteins into the subunit. Circularly permuted GTPase that catalyzes slow GTP hydrolysis, GTPase activity is stimulated by the 30S ribosomal subunit. This Actinobacillus pleuropneumoniae serotype 5b (strain L20) protein is Small ribosomal subunit biogenesis GTPase RsgA.